The primary structure comprises 242 residues: C-reactive protein 3.3 (242 aa).

The first 24 residues, 1-24 (MKTFHGPTCGTAVSLCLLLFLTSA), serve as a signal peptide directing secretion. Residues 30–241 (ITSKVKFPPS…GVVLSPNEIC (212 aa)) enclose the Pentraxin (PTX) domain. The phosphocholine site is built by Thr-60 and Tyr-63. 2 disulfide bridges follow: Cys-62-Cys-125 and Cys-112-Cys-144. 2 residues coordinate Ca(2+): Asp-85 and Asn-86. Asn-147 is a glycosylation site (N-linked (GlcNAc...) asparagine). Positions 169, 170, and 180 each coordinate Ca(2+). Cysteines 207 and 241 form a disulfide.

The protein belongs to the pentraxin family. In terms of assembly, homopentamer. Pentraxin (or pentaxin) have a discoid arrangement of 5 non-covalently bound subunits. It depends on Ca(2+) as a cofactor.

It localises to the secreted. Might serve the role of immunoglobulins. The sequence is that of C-reactive protein 3.3 from Limulus polyphemus (Atlantic horseshoe crab).